Here is a 576-residue protein sequence, read N- to C-terminus: V-type ATP synthase alpha chain (576 aa).

238 to 245 provides a ligand contact to ATP; sequence GPFGAGKT.

The protein belongs to the ATPase alpha/beta chains family.

It carries out the reaction ATP + H2O + 4 H(+)(in) = ADP + phosphate + 5 H(+)(out). In terms of biological role, produces ATP from ADP in the presence of a proton gradient across the membrane. The V-type alpha chain is a catalytic subunit. This Borrelia turicatae (strain 91E135) protein is V-type ATP synthase alpha chain.